Reading from the N-terminus, the 265-residue chain is 5'-nucleotidase SurE (265 aa).

A divalent metal cation is bound by residues D9, D10, S40, and N96.

This sequence belongs to the SurE nucleotidase family. Requires a divalent metal cation as cofactor.

The protein localises to the cytoplasm. It carries out the reaction a ribonucleoside 5'-phosphate + H2O = a ribonucleoside + phosphate. Nucleotidase that shows phosphatase activity on nucleoside 5'-monophosphates. The polypeptide is 5'-nucleotidase SurE (Methanothrix thermoacetophila (strain DSM 6194 / JCM 14653 / NBRC 101360 / PT) (Methanosaeta thermophila)).